Consider the following 205-residue polypeptide: RNA pyrophosphohydrolase (205 aa).

Positions 6–149 constitute a Nudix hydrolase domain; sequence GFRPNVGIVL…KRGVYARALR (144 aa). The short motif at 38-59 is the Nudix box element; sequence GGMNTDETPVEAMYRELREETG. Residues 177–205 are disordered; the sequence is PGSSAAGHDSPRKRPRKRSGARPMRINND. The span at 187–196 shows a compositional bias: basic residues; the sequence is PRKRPRKRSG.

The protein belongs to the Nudix hydrolase family. RppH subfamily. It depends on a divalent metal cation as a cofactor.

Its function is as follows. Accelerates the degradation of transcripts by removing pyrophosphate from the 5'-end of triphosphorylated RNA, leading to a more labile monophosphorylated state that can stimulate subsequent ribonuclease cleavage. This Xanthomonas oryzae pv. oryzae (strain MAFF 311018) protein is RNA pyrophosphohydrolase.